A 426-amino-acid polypeptide reads, in one-letter code: MSKSENLYSAARELIPGGVNSPVRAFTGVGGTPLFIEKADGAYLYDVDGKAYIDYVGSWGPMVLGHNHPAIRNAVIEAAERGLSFGAPTEMEVKMAQLVTELVPTMDMVRMVNSGTEATMSAIRLARGFTGRDKIIKFEGCYHGHADCLLVKAGSGALTLGQPNSPGVPADFAKHTLTCTYNDLASVRAAFEQYPQEIACIIVEPVAGNMNCVPPLPEFLPGLRALCDEFGALLIIDEVMTGFRVALAGAQDYYGVEPDLTCLGKIIGGGMPVGAFGGRRDVMDALAPTGPVYQAGTLSGNPIAMAAGFACLNEVAQPGVHETLDELTTRLAEGLREAAEEAGIPLVVNHVGGMFGIFFTDAESVTCYQDVMACDVERFKRFFHMMLDEGVYLAPSAFEADFMSVAHSMEDINNTIDAARRVFAKL.

Residue K265 is modified to N6-(pyridoxal phosphate)lysine.

Belongs to the class-III pyridoxal-phosphate-dependent aminotransferase family. HemL subfamily. As to quaternary structure, homodimer. The cofactor is pyridoxal 5'-phosphate.

Its subcellular location is the cytoplasm. It carries out the reaction (S)-4-amino-5-oxopentanoate = 5-aminolevulinate. It functions in the pathway porphyrin-containing compound metabolism; protoporphyrin-IX biosynthesis; 5-aminolevulinate from L-glutamyl-tRNA(Glu): step 2/2. This Escherichia coli O81 (strain ED1a) protein is Glutamate-1-semialdehyde 2,1-aminomutase.